The primary structure comprises 440 residues: uncharacterized protein (440 aa).

The first 19 residues, 1–19 (MKKLLLAASIIYFASVSLA), serve as a signal peptide directing secretion.

This is an uncharacterized protein from Rickettsia typhi (strain ATCC VR-144 / Wilmington).